The primary structure comprises 72 residues: Translation initiation factor IF-1 (72 aa).

The region spanning 1–72 (MSKEDSFEME…SKGRITYRAR (72 aa)) is the S1-like domain.

This sequence belongs to the IF-1 family. Component of the 30S ribosomal translation pre-initiation complex which assembles on the 30S ribosome in the order IF-2 and IF-3, IF-1 and N-formylmethionyl-tRNA(fMet); mRNA recruitment can occur at any time during PIC assembly.

The protein resides in the cytoplasm. One of the essential components for the initiation of protein synthesis. Stabilizes the binding of IF-2 and IF-3 on the 30S subunit to which N-formylmethionyl-tRNA(fMet) subsequently binds. Helps modulate mRNA selection, yielding the 30S pre-initiation complex (PIC). Upon addition of the 50S ribosomal subunit IF-1, IF-2 and IF-3 are released leaving the mature 70S translation initiation complex. This chain is Translation initiation factor IF-1, found in Pseudomonas syringae pv. tomato (strain ATCC BAA-871 / DC3000).